The chain runs to 220 residues: Adenylate kinase (220 aa).

ATP is bound at residue 10–15 (GAGKGT). Residues 30-59 (STGDMLRAAVKAGTPLGLKAKEVMDGGNLV) form an NMP region. AMP is bound by residues threonine 31, arginine 36, 57-59 (NLV), 85-88 (GFPR), and glutamine 92. The tract at residues 122–159 (GRRVHPASGRTYHIRFNPPQTAGMDDETGEPLVQRADD) is LID. Residues arginine 123 and 132 to 133 (TY) contribute to the ATP site. AMP-binding residues include arginine 156 and arginine 167. Glycine 205 is a binding site for ATP.

The protein belongs to the adenylate kinase family. As to quaternary structure, monomer.

It is found in the cytoplasm. The enzyme catalyses AMP + ATP = 2 ADP. It participates in purine metabolism; AMP biosynthesis via salvage pathway; AMP from ADP: step 1/1. Its function is as follows. Catalyzes the reversible transfer of the terminal phosphate group between ATP and AMP. Plays an important role in cellular energy homeostasis and in adenine nucleotide metabolism. The sequence is that of Adenylate kinase from Chlorobium luteolum (strain DSM 273 / BCRC 81028 / 2530) (Pelodictyon luteolum).